Here is a 113-residue protein sequence, read N- to C-terminus: Colipase (113 aa).

Positions 1-18 are cleaved as a signal peptide; that stretch reads MEKVLVLLLVSLLAVAYA. Residues 19-23 constitute a propeptide, enterostatin, activation peptide; that stretch reads APGPR. 5 cysteine pairs are disulfide-bonded: Cys-35-Cys-46, Cys-41-Cys-57, Cys-45-Cys-79, Cys-67-Cys-87, and Cys-81-Cys-105.

This sequence belongs to the colipase family. Forms a 1:1 stoichiometric complex with pancreatic lipase. Expressed by the pancreas.

The protein localises to the secreted. Colipase is a cofactor of pancreatic lipase. It allows the lipase to anchor itself to the lipid-water interface. Without colipase the enzyme is washed off by bile salts, which have an inhibitory effect on the lipase. Functionally, enterostatin has a biological activity as a satiety signal. In Mus musculus (Mouse), this protein is Colipase.